We begin with the raw amino-acid sequence, 423 residues long: Histidine--tRNA ligase (423 aa).

The protein belongs to the class-II aminoacyl-tRNA synthetase family. Homodimer.

It localises to the cytoplasm. The enzyme catalyses tRNA(His) + L-histidine + ATP = L-histidyl-tRNA(His) + AMP + diphosphate + H(+). This chain is Histidine--tRNA ligase, found in Rhodococcus jostii (strain RHA1).